We begin with the raw amino-acid sequence, 253 residues long: MHRTSIVEELERHQQDQKADQEPGSVSDASNSALQESSDPRLSTTDNTNTPEINVNDQQQEQQVASGEDTDPPSPRMKTIVKPPPIKVVPPLNFGPVERNLYRSGQPEPISFPFLEKLRLRTILWLAVEDPSDNFLAFADDHEIVVHHLGLVTEGTNPWDQLTESSIVAALQIIMDRDSYPLLVCCGMGRHRTGTIVGCLRRLQGWNLASVSEEYRRYAGSRGGRALIELHIEAFDTSRIIVYPESAPEWCSS.

Residues 1–21 show a composition bias toward basic and acidic residues; it reads MHRTSIVEELERHQQDQKADQ. Residues 1 to 84 are disordered; sequence MHRTSIVEEL…PRMKTIVKPP (84 aa). Residues 27–65 are compositionally biased toward polar residues; the sequence is SDASNSALQESSDPRLSTTDNTNTPEINVNDQQQEQQVA. Positions 93–249 constitute a Tyrosine-protein phosphatase domain; the sequence is NFGPVERNLY…IIVYPESAPE (157 aa). The active-site Phosphocysteine intermediate is cysteine 186.

This sequence belongs to the protein-tyrosine phosphatase family.

It localises to the cytoplasm. The catalysed reaction is O-phospho-L-tyrosyl-[protein] + H2O = L-tyrosyl-[protein] + phosphate. Its function is as follows. Putative tyrosine-protein phosphatase required for protection against superoxide stress. This Yarrowia lipolytica (strain CLIB 122 / E 150) (Yeast) protein is Putative tyrosine-protein phosphatase OCA1 (OCA1).